A 336-amino-acid chain; its full sequence is Alcohol dehydrogenase (336 aa).

Positions 37, 58, 89, 92, 95, 103, and 145 each coordinate Zn(2+).

This sequence belongs to the zinc-containing alcohol dehydrogenase family. Zn(2+) serves as cofactor.

The catalysed reaction is a primary alcohol + NAD(+) = an aldehyde + NADH + H(+). The enzyme catalyses a secondary alcohol + NAD(+) = a ketone + NADH + H(+). The polypeptide is Alcohol dehydrogenase (adh) (Staphylococcus aureus (strain USA300)).